The chain runs to 495 residues: Probable aspartic-type endopeptidase OPSB (495 aa).

The N-terminal stretch at 1 to 19 is a signal peptide; it reads MRGDSFIWSLATAIPLLST. Positions 73–408 constitute a Peptidase A1 domain; it reads YFCNLTLGTP…DLDNNEISIA (336 aa). N-linked (GlcNAc...) asparagine glycosylation is present at Asn-76. Residue Asp-91 is part of the active site. An N-linked (GlcNAc...) asparagine glycan is attached at Asn-136. Asp-290 is an active-site residue. An N-linked (GlcNAc...) asparagine glycan is attached at Asn-413. Positions 448–470 are disordered; it reads TGLPGVETGVPGSRPPSSKAAGQ. A lipid anchor (GPI-anchor amidated alanine) is attached at Ala-467. A propeptide spans 468–495 (removed in mature form); that stretch reads AGQAKRPDFVLGVAAVGLAGAGMLFAAM.

The protein belongs to the peptidase A1 family.

Its subcellular location is the cell membrane. Its function is as follows. Probable GPI-anchored aspartic-type endopeptidase which contributes to virulence. The sequence is that of Probable aspartic-type endopeptidase OPSB (OPSB) from Trichophyton verrucosum (strain HKI 0517).